Here is a 190-residue protein sequence, read N- to C-terminus: Potassium-transporting ATPase KdpC subunit (190 aa).

The chain crosses the membrane as a helical span at residues 13–33 (VGFLLLTLVCGVIYPGVVTII).

It belongs to the KdpC family. The system is composed of three essential subunits: KdpA, KdpB and KdpC.

The protein localises to the cell membrane. In terms of biological role, part of the high-affinity ATP-driven potassium transport (or Kdp) system, which catalyzes the hydrolysis of ATP coupled with the electrogenic transport of potassium into the cytoplasm. This subunit acts as a catalytic chaperone that increases the ATP-binding affinity of the ATP-hydrolyzing subunit KdpB by the formation of a transient KdpB/KdpC/ATP ternary complex. The protein is Potassium-transporting ATPase KdpC subunit of Listeria innocua serovar 6a (strain ATCC BAA-680 / CLIP 11262).